The sequence spans 428 residues: Glucose-1-phosphate adenylyltransferase (428 aa).

Residues tyrosine 99, glycine 164, 179–180 (EK), and serine 190 contribute to the alpha-D-glucose 1-phosphate site.

Belongs to the bacterial/plant glucose-1-phosphate adenylyltransferase family. In terms of assembly, homotetramer.

It carries out the reaction alpha-D-glucose 1-phosphate + ATP + H(+) = ADP-alpha-D-glucose + diphosphate. It functions in the pathway glycan biosynthesis; glycogen biosynthesis. In terms of biological role, involved in the biosynthesis of ADP-glucose, a building block required for the elongation reactions to produce glycogen. Catalyzes the reaction between ATP and alpha-D-glucose 1-phosphate (G1P) to produce pyrophosphate and ADP-Glc. This Thermomicrobium roseum (strain ATCC 27502 / DSM 5159 / P-2) protein is Glucose-1-phosphate adenylyltransferase.